Reading from the N-terminus, the 274-residue chain is Cytochrome c oxidase subunit 3 (274 aa).

Residues 1–15 (MTHQTHAYHMVNPSP) lie on the Mitochondrial matrix side of the membrane. A helical membrane pass occupies residues 16–34 (WPLTGALSALLMTSGLAMW). The Mitochondrial intermembrane segment spans residues 35-40 (FHFNSS). Residues 41–66 (MLLSLGMLTNLLTMYQWWRDIVREGT) traverse the membrane as a helical segment. The Mitochondrial matrix segment spans residues 67 to 72 (FQGHHT). Residues 73–105 (SIVQKGLRYGMVLFIISEIFFFAGFFWAFYHSS) traverse the membrane as a helical segment. The Mitochondrial intermembrane portion of the chain corresponds to 106-128 (LAPTPELGGCWPPTGIHPLNPLE). Residues 129–152 (VPLLNTAVLLASGVSITWAHHSLM) form a helical membrane-spanning segment. At 153–155 (EGN) the chain is on the mitochondrial matrix side. A helical transmembrane segment spans residues 156-183 (RVQMLQALLITITLGLYFTLLQASEYFE). Over 184-190 (TSFTISD) the chain is Mitochondrial intermembrane. A helical membrane pass occupies residues 191–223 (GVYGSTFFMATGFHGLHVIIGSTFLTVCFFRQL). The Mitochondrial matrix portion of the chain corresponds to 224–232 (SFHFTSNHH). A helical membrane pass occupies residues 233–256 (FGFEAAAWYWHFVDVVWLFLYVSI). Topologically, residues 257–274 (YWWGSYSFSIDPMQLTSN) are mitochondrial intermembrane.

It belongs to the cytochrome c oxidase subunit 3 family. In terms of assembly, component of the cytochrome c oxidase (complex IV, CIV), a multisubunit enzyme composed of 14 subunits. The complex is composed of a catalytic core of 3 subunits MT-CO1, MT-CO2 and MT-CO3, encoded in the mitochondrial DNA, and 11 supernumerary subunits COX4I, COX5A, COX5B, COX6A, COX6B, COX6C, COX7A, COX7B, COX7C, COX8 and NDUFA4, which are encoded in the nuclear genome. The complex exists as a monomer or a dimer and forms supercomplexes (SCs) in the inner mitochondrial membrane with NADH-ubiquinone oxidoreductase (complex I, CI) and ubiquinol-cytochrome c oxidoreductase (cytochrome b-c1 complex, complex III, CIII), resulting in different assemblies (supercomplex SCI(1)III(2)IV(1) and megacomplex MCI(2)III(2)IV(2)).

The protein resides in the mitochondrion inner membrane. The catalysed reaction is 4 Fe(II)-[cytochrome c] + O2 + 8 H(+)(in) = 4 Fe(III)-[cytochrome c] + 2 H2O + 4 H(+)(out). Functionally, component of the cytochrome c oxidase, the last enzyme in the mitochondrial electron transport chain which drives oxidative phosphorylation. The respiratory chain contains 3 multisubunit complexes succinate dehydrogenase (complex II, CII), ubiquinol-cytochrome c oxidoreductase (cytochrome b-c1 complex, complex III, CIII) and cytochrome c oxidase (complex IV, CIV), that cooperate to transfer electrons derived from NADH and succinate to molecular oxygen, creating an electrochemical gradient over the inner membrane that drives transmembrane transport and the ATP synthase. Cytochrome c oxidase is the component of the respiratory chain that catalyzes the reduction of oxygen to water. Electrons originating from reduced cytochrome c in the intermembrane space (IMS) are transferred via the dinuclear copper A center (CU(A)) of subunit 2 and heme A of subunit 1 to the active site in subunit 1, a binuclear center (BNC) formed by heme A3 and copper B (CU(B)). The BNC reduces molecular oxygen to 2 water molecules using 4 electrons from cytochrome c in the IMS and 4 protons from the mitochondrial matrix. In Lemur catta (Ring-tailed lemur), this protein is Cytochrome c oxidase subunit 3 (MT-CO3).